A 58-amino-acid polypeptide reads, in one-letter code: Ribulose bisphosphate carboxylase large chain (58 aa).

Positions 1 to 2 (MS) are excised as a propeptide. An N-acetylproline modification is found at P3. K14 bears the N6,N6,N6-trimethyllysine mark.

It belongs to the RuBisCO large chain family. Type I subfamily. Heterohexadecamer of 8 large chains and 8 small chains.

It localises to the plastid. Its subcellular location is the chloroplast. It carries out the reaction 2 (2R)-3-phosphoglycerate + 2 H(+) = D-ribulose 1,5-bisphosphate + CO2 + H2O. The catalysed reaction is D-ribulose 1,5-bisphosphate + O2 = 2-phosphoglycolate + (2R)-3-phosphoglycerate + 2 H(+). Functionally, ruBisCO catalyzes two reactions: the carboxylation of D-ribulose 1,5-bisphosphate, the primary event in carbon dioxide fixation, as well as the oxidative fragmentation of the pentose substrate in the photorespiration process. Both reactions occur simultaneously and in competition at the same active site. The polypeptide is Ribulose bisphosphate carboxylase large chain (rbcL) (Euphorbia characias (Albanian spurge)).